The sequence spans 507 residues: Light-independent protochlorophyllide reductase subunit B (507 aa).

Aspartate 36 is a binding site for [4Fe-4S] cluster. The active-site Proton donor is aspartate 293. 428-429 (GM) provides a ligand contact to substrate.

It belongs to the ChlB/BchB/BchZ family. In terms of assembly, protochlorophyllide reductase is composed of three subunits; ChlL, ChlN and ChlB. Forms a heterotetramer of two ChlB and two ChlN subunits. It depends on [4Fe-4S] cluster as a cofactor.

It is found in the plastid. The protein resides in the chloroplast. It carries out the reaction chlorophyllide a + oxidized 2[4Fe-4S]-[ferredoxin] + 2 ADP + 2 phosphate = protochlorophyllide a + reduced 2[4Fe-4S]-[ferredoxin] + 2 ATP + 2 H2O. It functions in the pathway porphyrin-containing compound metabolism; chlorophyll biosynthesis (light-independent). Functionally, component of the dark-operative protochlorophyllide reductase (DPOR) that uses Mg-ATP and reduced ferredoxin to reduce ring D of protochlorophyllide (Pchlide) to form chlorophyllide a (Chlide). This reaction is light-independent. The NB-protein (ChlN-ChlB) is the catalytic component of the complex. The polypeptide is Light-independent protochlorophyllide reductase subunit B (Porphyra purpurea (Red seaweed)).